The primary structure comprises 479 residues: Anaerobic nitric oxide reductase flavorubredoxin (479 aa).

Residues 30 to 210 (LRGSSYNSYL…PFSRLVTPKI (181 aa)) form a zinc metallo-hydrolase region. The Fe cation site is built by His-79, Glu-81, Asp-83, His-147, Asp-166, and His-227. In terms of domain architecture, Flavodoxin-like spans 254–393 (ITIFYDTMSN…LCRQHGRDIA (140 aa)). FMN is bound by residues 260-264 (TMSNN) and 342-369 (AFGSHGWSGGAVDRLSTRLQDAGFEMSL). In terms of domain architecture, Rubredoxin-like spans 423–474 (GPKMQCSVCQWIYDPAQGEPLQDVAPGTPWSDVPDNFLCPECSLGKDVFDVL). Positions 428, 431, 461, and 464 each coordinate Fe cation.

In the N-terminal section; belongs to the zinc metallo-hydrolase group 3 family. Homotetramer. Fe cation is required as a cofactor. It depends on FMN as a cofactor.

The protein resides in the cytoplasm. The protein operates within nitrogen metabolism; nitric oxide reduction. In terms of biological role, anaerobic nitric oxide reductase; uses NADH to detoxify nitric oxide (NO), protecting several 4Fe-4S NO-sensitive enzymes. Has at least 2 reductase partners, only one of which (NorW, flavorubredoxin reductase) has been identified. NO probably binds to the di-iron center; electrons enter from the NorW at rubredoxin and are transferred sequentially to the FMN center and the di-iron center. Also able to function as an aerobic oxygen reductase. This chain is Anaerobic nitric oxide reductase flavorubredoxin, found in Salmonella choleraesuis (strain SC-B67).